We begin with the raw amino-acid sequence, 156 residues long: Succinate dehydrogenase [ubiquinone] cytochrome b small subunit 1, mitochondrial (156 aa).

A mitochondrion-targeting transit peptide spans 1 to 25 (MLSAVRRAIPLSARILRTSLIQRCA). Over 26–59 (GATSAAVTGAAPPQFDPIAAEKGFKPLHSHGTLF) the chain is Mitochondrial matrix. A helical transmembrane segment spans residues 60–78 (KIERYFAAAMVPLIPAAYF). The Mitochondrial intermembrane portion of the chain corresponds to 79-83 (IHGRE). A helical membrane pass occupies residues 84 to 104 (MDLCLALALTLHVHWGVWGVV). H95 serves as a coordination point for heme b. Topologically, residues 105-119 (NDYGRPFVLGDTLAA) are mitochondrial matrix. Y107 is an a rhodoquinol binding site. The helical transmembrane segment at 120 to 141 (AVRVGAYIFTACLLAGLLYFNE) threads the bilayer. Topologically, residues 142 to 156 (HDVGLTRAFEMVWEL) are mitochondrial intermembrane.

The protein belongs to the CybS family. Component of the mitochondrial electron transport chain complex II composed of four subunits: a flavoprotein (Fp), an iron-sulfur protein (Ip), and a large cytochrome b (CybL) subunit and a small cytochrome b (CybS) subunit. There are 2 developmental stage-specific forms of complex II which have the Ip and CybL subunits in common. Complex II from the free-living larvae (aerobic environment) acts as a succinate dehydrogenase and is composed of the common subunit Ip and CybL and the stage specific subunits FpL and CybSL. Complex II from parasitic larvae and adults (anaerobic environment) acts as a fumarate reductase and is composed of the common subunit Ip and CybL and the stage specific subunits FpA and CybSA. Heme b serves as cofactor. As to expression, expressed in adult muscles (at protein level).

It is found in the mitochondrion inner membrane. Its function is as follows. Membrane-bound small subunit (CybS) of the mitochondrial electron transport chain complex II, which together with the membrane-bound large subunit (CybL), anchor the catalytic subunits to the inner mitochondria membrane. During the parasitic larvae and adult stages, which occur in an anaerobic environment, complex II acts as a fumarate reductase by transferring electrons from rhodoquinol to fumarate. The protein is Succinate dehydrogenase [ubiquinone] cytochrome b small subunit 1, mitochondrial of Ascaris suum (Pig roundworm).